Reading from the N-terminus, the 460-residue chain is Cysteine--tRNA ligase (460 aa).

C28 provides a ligand contact to Zn(2+). Residues 30–40 (MTVYDYCHLGH) carry the 'HIGH' region motif. Zn(2+)-binding residues include C209, H234, and E238. Residues 266–270 (KMSKS) carry the 'KMSKS' region motif. ATP is bound at residue K269.

The protein belongs to the class-I aminoacyl-tRNA synthetase family. In terms of assembly, monomer. It depends on Zn(2+) as a cofactor.

The protein localises to the cytoplasm. The catalysed reaction is tRNA(Cys) + L-cysteine + ATP = L-cysteinyl-tRNA(Cys) + AMP + diphosphate. The chain is Cysteine--tRNA ligase from Pseudomonas aeruginosa (strain UCBPP-PA14).